The following is a 142-amino-acid chain: MLMGEFTHTIDSKGRLIIPAKFREQLGAHFIVTRGLDGCLFGYPLNEWAILEQKLKALPLTKRDARAFVRFLYSAATDCEIDKQGRINIPITLRTHASLEKKCVIVGVSNRLEIWSAERWNKFTSETADNFDEIAEDLNIDF.

SpoVT-AbrB domains lie at 5–47 and 76–119; these read EFTH…PLNE and ATDC…SAER.

The protein belongs to the MraZ family. As to quaternary structure, forms oligomers.

The protein localises to the cytoplasm. It localises to the nucleoid. The sequence is that of Transcriptional regulator MraZ from Limosilactobacillus reuteri (strain DSM 20016) (Lactobacillus reuteri).